Consider the following 421-residue polypeptide: UDP-N-acetylglucosamine 1-carboxyvinyltransferase (421 aa).

22–23 (KN) contributes to the phosphoenolpyruvate binding site. Arginine 93 serves as a coordination point for UDP-N-acetyl-alpha-D-glucosamine. Cysteine 117 acts as the Proton donor in catalysis. The residue at position 117 (cysteine 117) is a 2-(S-cysteinyl)pyruvic acid O-phosphothioketal. Residues 122-126 (RPVDL), aspartate 308, and isoleucine 330 each bind UDP-N-acetyl-alpha-D-glucosamine.

It belongs to the EPSP synthase family. MurA subfamily.

It localises to the cytoplasm. It catalyses the reaction phosphoenolpyruvate + UDP-N-acetyl-alpha-D-glucosamine = UDP-N-acetyl-3-O-(1-carboxyvinyl)-alpha-D-glucosamine + phosphate. It functions in the pathway cell wall biogenesis; peptidoglycan biosynthesis. In terms of biological role, cell wall formation. Adds enolpyruvyl to UDP-N-acetylglucosamine. The polypeptide is UDP-N-acetylglucosamine 1-carboxyvinyltransferase (Pseudomonas fluorescens (strain ATCC BAA-477 / NRRL B-23932 / Pf-5)).